The primary structure comprises 173 residues: MDTIVDFKALPYRKCVGILVFNYEGKVWVGRRLMTVSHANVDMSKLWQLPQGGINQGEKPIDAARRELYEETGIQSVKLIKEAQDWFEYDFPQELMGHVLNNKYRGQTQKWFSFQFTGEISEITINPPPDGNKAEFDQWKWVDLEELPSIVVSFKKHVYTQVVKEFRNSFKYL.

Residues 11-164 enclose the Nudix hydrolase domain; sequence PYRKCVGILV…KKHVYTQVVK (154 aa). The Nudix box motif lies at 52–73; the sequence is GGINQGEKPIDAARRELYEETG.

The protein belongs to the Nudix hydrolase family. RppH subfamily. A divalent metal cation is required as a cofactor.

Its function is as follows. Accelerates the degradation of transcripts by removing pyrophosphate from the 5'-end of triphosphorylated RNA, leading to a more labile monophosphorylated state that can stimulate subsequent ribonuclease cleavage. This chain is RNA pyrophosphohydrolase, found in Bartonella clarridgeiae.